The chain runs to 854 residues: Periodic tryptophan protein 2 homolog (854 aa).

13 WD repeats span residues 9 to 52 (NLVG…TFPF), 53 to 93 (ENHK…LHYF), 94 to 132 (NFKS…EERE), 144 to 183 (GHFD…GFHP), 188 to 227 (GHKN…QAGE), 252 to 291 (NQNS…MLYQ), 294 to 334 (ITQS…YVLK), 337 to 376 (SHYD…CIVT), 379 to 418 (QHTS…NFRT), 422 to 464 (PSRV…ETLA), 465 to 504 (GHEG…GIVE), 507 to 546 (PIPS…QTSL), and 569 to 608 (SLNK…LIKK). Residue Thr-640 is modified to Phosphothreonine. Residue Ser-645 is modified to Phosphoserine. The WD 14 repeat unit spans residues 668-709 (TRPEIICHGVQFSPSGGAFAAATTEGLMIYSLYNDFLFDPIN).

It belongs to the WD repeat PWP2 family.

This chain is Periodic tryptophan protein 2 homolog, found in Schizosaccharomyces pombe (strain 972 / ATCC 24843) (Fission yeast).